The sequence spans 189 residues: Interferon alpha-8 (189 aa).

Positions 1 to 23 are cleaved as a signal peptide; the sequence is MALTFYLLVALVVLSYKSFSSLG. 2 cysteine pairs are disulfide-bonded: Cys-24–Cys-122 and Cys-52–Cys-162.

This sequence belongs to the alpha/beta interferon family.

It is found in the secreted. Functionally, produced by macrophages, IFN-alpha have antiviral activities. Interferon stimulates the production of two enzymes: a protein kinase and an oligoadenylate synthetase. The polypeptide is Interferon alpha-8 (IFNA8) (Homo sapiens (Human)).